A 149-amino-acid chain; its full sequence is Large ribosomal subunit protein uL11 (149 aa).

Belongs to the universal ribosomal protein uL11 family. As to quaternary structure, part of the ribosomal stalk of the 50S ribosomal subunit. Interacts with L10 and the large rRNA to form the base of the stalk. L10 forms an elongated spine to which L12 dimers bind in a sequential fashion forming a multimeric L10(L12)X complex. One or more lysine residues are methylated.

In terms of biological role, forms part of the ribosomal stalk which helps the ribosome interact with GTP-bound translation factors. The chain is Large ribosomal subunit protein uL11 from Methylobacterium nodulans (strain LMG 21967 / CNCM I-2342 / ORS 2060).